The chain runs to 100 residues: Small ribosomal subunit protein uS14c (100 aa).

The protein belongs to the universal ribosomal protein uS14 family. In terms of assembly, part of the 30S ribosomal subunit.

It is found in the plastid. It localises to the chloroplast. Its function is as follows. Binds 16S rRNA, required for the assembly of 30S particles. The sequence is that of Small ribosomal subunit protein uS14c from Chara vulgaris (Common stonewort).